The following is a 408-amino-acid chain: Argininosuccinate synthase (408 aa).

Residues A11–S19 and A38 each bind ATP. Y91 and S96 together coordinate L-citrulline. G121 contacts ATP. Positions 123, 127, and 128 each coordinate L-aspartate. N127 contributes to the L-citrulline binding site. The L-citrulline site is built by R131, S182, S191, E267, and Y279.

Belongs to the argininosuccinate synthase family. Type 1 subfamily. In terms of assembly, homotetramer.

The protein localises to the cytoplasm. The enzyme catalyses L-citrulline + L-aspartate + ATP = 2-(N(omega)-L-arginino)succinate + AMP + diphosphate + H(+). It participates in amino-acid biosynthesis; L-arginine biosynthesis; L-arginine from L-ornithine and carbamoyl phosphate: step 2/3. This Azorhizobium caulinodans (strain ATCC 43989 / DSM 5975 / JCM 20966 / LMG 6465 / NBRC 14845 / NCIMB 13405 / ORS 571) protein is Argininosuccinate synthase.